Here is a 364-residue protein sequence, read N- to C-terminus: Dihydroorotate dehydrogenase (quinone) (364 aa).

Residues 61–65 and threonine 85 contribute to the FMN site; that span reads AGYDK. Residue lysine 65 coordinates substrate. 110–114 contributes to the substrate binding site; it reads NRLGF. FMN contacts are provided by asparagine 139 and asparagine 170. Asparagine 170 is a substrate binding site. Residue serine 173 is the Nucleophile of the active site. Asparagine 175 contributes to the substrate binding site. Residues lysine 215 and serine 243 each contribute to the FMN site. 244-245 is a binding site for substrate; sequence NT. Residues glycine 266, glycine 295, and 316 to 317 contribute to the FMN site; that span reads YS.

Belongs to the dihydroorotate dehydrogenase family. Type 2 subfamily. As to quaternary structure, monomer. Requires FMN as cofactor.

It is found in the cell membrane. The catalysed reaction is (S)-dihydroorotate + a quinone = orotate + a quinol. The protein operates within pyrimidine metabolism; UMP biosynthesis via de novo pathway; orotate from (S)-dihydroorotate (quinone route): step 1/1. Functionally, catalyzes the conversion of dihydroorotate to orotate with quinone as electron acceptor. The polypeptide is Dihydroorotate dehydrogenase (quinone) (Brucella melitensis biotype 2 (strain ATCC 23457)).